The primary structure comprises 512 residues: Multidrug export protein EmrB (512 aa).

Residues 1–12 (MQQQKPLEGAQL) lie on the Cytoplasmic side of the membrane. The chain crosses the membrane as a helical span at residues 13–38 (VIMTIALSLATFMQVLDSTIANVAIP). Residues 39–51 (TIAGNLGSSLSQG) lie on the Extracellular side of the membrane. A helical membrane pass occupies residues 52–72 (TWVITSFGVANAISIPLTGWL). The Cytoplasmic portion of the chain corresponds to 73–81 (AKRVGEVKL). A helical membrane pass occupies residues 82 to 100 (FLWSTIAFAIASWACGVSS). The Extracellular portion of the chain corresponds to 101–109 (SLNMLIFFR). The chain crosses the membrane as a helical span at residues 110–128 (VIQGIVAGPLIPLSQSLLL). Over 129–136 (NNYPPAKR) the chain is Cytoplasmic. A helical transmembrane segment spans residues 137 to 159 (SIALALWSMTVIVAPICGPILGG). Residues 160 to 164 (YISDN) are Extracellular-facing. Residues 165–189 (YHWGWIFFINVPIGVAVVLMTLQTL) form a helical membrane-spanning segment. The Cytoplasmic portion of the chain corresponds to 190–202 (RGRETRTERRRID). A helical membrane pass occupies residues 203–223 (AVGLALLVIGIGSLQIMLDRG). The Extracellular portion of the chain corresponds to 224 to 233 (KELDWFSSQE). A helical transmembrane segment spans residues 234 to 249 (IIILTVVAVVAICFLI). The Cytoplasmic portion of the chain corresponds to 250–271 (VWELTDDNPIVDLSLFKSRNFT). Residues 272–295 (IGCLCISLAYMLYFGAIVLLPQLL) form a helical membrane-spanning segment. At 296–305 (QEVYGYTATW) the chain is on the extracellular side. A helical transmembrane segment spans residues 306–329 (AGLASAPVGIIPVILSPIIGRFAH). Topologically, residues 330-335 (KLDMRR) are cytoplasmic. The helical transmembrane segment at 336–355 (LVTFSFIMYAVCFYWRAYTF) threads the bilayer. Residues 356-363 (EPGMDFGA) are Extracellular-facing. Residues 364–387 (SAWPQFIQGFAVACFFMPLTTITL) form a helical membrane-spanning segment. The Cytoplasmic portion of the chain corresponds to 388-407 (SGLPPERLAAASSLSNFTRT). Residues 408–428 (LAGSIGTSITTTMWTNRESMH) form a helical membrane-spanning segment. Residues 429–481 (HAQLTESVNPFNPNAQAMYSQLEGLGMTQQQASGWIAQQITNQGLIISANEIF) lie on the Extracellular side of the membrane. Residues 482-504 (WMSAGIFLVLLGLVWFAKPPFGA) traverse the membrane as a helical segment. The Cytoplasmic segment spans residues 505 to 512 (GGGGGGAH).

The protein belongs to the major facilitator superfamily. EmrB family. As to quaternary structure, part of the tripartite efflux system EmrAB-TolC, which is composed of an inner membrane transporter, EmrB, a periplasmic membrane fusion protein, EmrA, and an outer membrane component, TolC. The complex forms a large protein conduit and can translocate molecules across both the inner and outer membranes. Interacts with EmrA.

It localises to the cell inner membrane. Part of the tripartite efflux system EmrAB-TolC, which confers resistance to antibiotics. The polypeptide is Multidrug export protein EmrB (emrB) (Escherichia coli O157:H7).